Consider the following 379-residue polypeptide: Glucose-1-phosphate adenylyltransferase (379 aa).

Residues Gly-164, 179–180 (EK), and Ser-190 each bind alpha-D-glucose 1-phosphate.

The protein belongs to the bacterial/plant glucose-1-phosphate adenylyltransferase family. As to quaternary structure, homotetramer.

The enzyme catalyses alpha-D-glucose 1-phosphate + ATP + H(+) = ADP-alpha-D-glucose + diphosphate. It functions in the pathway glycan biosynthesis; glycogen biosynthesis. Involved in the biosynthesis of ADP-glucose, a building block required for the elongation reactions to produce glycogen. Catalyzes the reaction between ATP and alpha-D-glucose 1-phosphate (G1P) to produce pyrophosphate and ADP-Glc. The chain is Glucose-1-phosphate adenylyltransferase from Streptococcus uberis (strain ATCC BAA-854 / 0140J).